The chain runs to 100 residues: Defensin-B4 (100 aa).

Positions 1–22 (MRASLLLFILLVYLAHAPQAQG) are cleaved as a signal peptide. Residues 23–26 (VFGP) constitute a propeptide that is removed on maturation. Intrachain disulfides connect cysteine 29/cysteine 56, cysteine 36/cysteine 50, and cysteine 40/cysteine 57. The segment at 60-100 (STGTSSSQGSHEVPVINSEPALESKPEPQDTQEEEATMVSE) is disordered. Positions 89 to 100 (DTQEEEATMVSE) are enriched in acidic residues.

The protein belongs to the beta-defensin family. In terms of tissue distribution, highly expressed in kidney, lowly expressed in spleen, and expressed at lower levels in lung.

The protein resides in the secreted. Its function is as follows. Has antimicrobial activity. The chain is Defensin-B4 from Ornithorhynchus anatinus (Duckbill platypus).